Reading from the N-terminus, the 325-residue chain is Formimidoylglutamase (325 aa).

Mn(2+) contacts are provided by His130, Asp156, His158, Asp160, Cys244, and Asp246.

Belongs to the arginase family. Mn(2+) is required as a cofactor.

It catalyses the reaction N-formimidoyl-L-glutamate + H2O = formamide + L-glutamate. The protein operates within amino-acid degradation; L-histidine degradation into L-glutamate; L-glutamate from N-formimidoyl-L-glutamate (hydrolase route): step 1/1. Catalyzes the conversion of N-formimidoyl-L-glutamate to L-glutamate and formamide. This Geobacillus sp. (strain WCH70) protein is Formimidoylglutamase.